Here is a 201-residue protein sequence, read N- to C-terminus: Lipopolysaccharide core heptose(II)-phosphate phosphatase (201 aa).

The first 35 residues, 1–35, serve as a signal peptide directing secretion; it reads MLAFTLRFIKNKRYFAILAGALVIIAGLTSQHAWS.

It belongs to the phosphoglycerate mutase family. Ais subfamily.

The protein resides in the periplasm. Its pathway is bacterial outer membrane biogenesis; lipopolysaccharide metabolism. Its function is as follows. Catalyzes the dephosphorylation of heptose(II) of the outer membrane lipopolysaccharide core. This chain is Lipopolysaccharide core heptose(II)-phosphate phosphatase, found in Salmonella enteritidis PT4 (strain P125109).